Reading from the N-terminus, the 431-residue chain is Histidinol dehydrogenase (431 aa).

The NAD(+) site is built by Tyr-127, Gln-189, and Asn-212. Substrate contacts are provided by Ser-237, Gln-259, and His-262. Gln-259 and His-262 together coordinate Zn(2+). Residues Glu-326 and His-327 each act as proton acceptor in the active site. 4 residues coordinate substrate: His-327, Asp-360, Glu-414, and His-419. A Zn(2+)-binding site is contributed by Asp-360. His-419 lines the Zn(2+) pocket.

The protein belongs to the histidinol dehydrogenase family. Zn(2+) is required as a cofactor.

It carries out the reaction L-histidinol + 2 NAD(+) + H2O = L-histidine + 2 NADH + 3 H(+). Its pathway is amino-acid biosynthesis; L-histidine biosynthesis; L-histidine from 5-phospho-alpha-D-ribose 1-diphosphate: step 9/9. Functionally, catalyzes the sequential NAD-dependent oxidations of L-histidinol to L-histidinaldehyde and then to L-histidine. This Xanthomonas axonopodis pv. citri (strain 306) protein is Histidinol dehydrogenase.